A 251-amino-acid chain; its full sequence is Aquaporin (251 aa).

Topologically, residues 1 to 11 (MAKEALKTLQS) are cytoplasmic. Residues 12-32 (MFGEMVASFVFGFAVYSAILG) traverse the membrane as a helical segment. Topologically, residues 33-42 (SSISQSSADK) are extracellular. The helical transmembrane segment at 43-63 (VIVGLTVGFSGIGVIYSFCDV) threads the bilayer. Residues 64–86 (TIAHFNPAITLAAILTSKIDVLQ) are Cytoplasmic-facing. The NPA motif lies at 69–71 (NPA). The helical transmembrane segment at 87–107 (GLGYMLAQYIGFMLAVCALLV) threads the bilayer. Topologically, residues 108 to 133 (CSPVEYKETLDTIRPGPTDFGATSLN) are extracellular. Residues 134-154 (VFFAEFFLTAIFVHIVFATAV) traverse the membrane as a helical segment. Over 155 to 179 (NPYKPKVDTEGKFVDPDEKEPVDRR) the chain is Cytoplasmic. A helical membrane pass occupies residues 180 to 200 (ITAPLCIGLTLGFLAFMGLAS). Residues 201–224 (SGGAFNPGLTFAPMAMSNTWSHFW) are Extracellular-facing. Positions 206–208 (NPG) match the NPG motif. Residues 225–245 (IYLGGQYLGGLTGGLLQVLVL) traverse the membrane as a helical segment. Residues 246-251 (YKLSSD) lie on the Cytoplasmic side of the membrane.

It belongs to the MIP/aquaporin (TC 1.A.8) family.

It localises to the cell membrane. Water channel required to facilitate the transport of water across membranes. Involved in osmotolerance. This is Aquaporin (AQP) from Encephalitozoon intestinalis (Microsporidian parasite).